The sequence spans 293 residues: Undecaprenyl-diphosphatase (293 aa).

The next 8 membrane-spanning stretches (helical) occupy residues 3–23, 43–63, 85–105, 109–129, 178–198, 203–223, 238–258, and 269–289; these read IALA…EFLP, KGKI…CWEF, VNVI…GKWI, LFNP…ILLA, FALV…MLFG, VATE…TVYE, IFAV…RWLL, and FAWY…TGVI.

Belongs to the UppP family.

Its subcellular location is the cell inner membrane. The catalysed reaction is di-trans,octa-cis-undecaprenyl diphosphate + H2O = di-trans,octa-cis-undecaprenyl phosphate + phosphate + H(+). Catalyzes the dephosphorylation of undecaprenyl diphosphate (UPP). Confers resistance to bacitracin. The polypeptide is Undecaprenyl-diphosphatase (Cupriavidus metallidurans (strain ATCC 43123 / DSM 2839 / NBRC 102507 / CH34) (Ralstonia metallidurans)).